Consider the following 348-residue polypeptide: Uroporphyrinogen decarboxylase (348 aa).

Residues 27-31 (RQAGR), Phe46, Asp76, Tyr152, Ser207, and His320 contribute to the substrate site.

It belongs to the uroporphyrinogen decarboxylase family. In terms of assembly, homodimer.

Its subcellular location is the cytoplasm. It catalyses the reaction uroporphyrinogen III + 4 H(+) = coproporphyrinogen III + 4 CO2. Its pathway is porphyrin-containing compound metabolism; protoporphyrin-IX biosynthesis; coproporphyrinogen-III from 5-aminolevulinate: step 4/4. Functionally, catalyzes the decarboxylation of four acetate groups of uroporphyrinogen-III to yield coproporphyrinogen-III. This Bacillus cereus (strain G9842) protein is Uroporphyrinogen decarboxylase.